Consider the following 474-residue polypeptide: MSTSAGTPTSAHAPLSIAPASTPHQRSLSVKPLAAAPSPAPVTQCSITSKEWIVPPRPKPGRKPATDTPPTKRKAQNRAAQRAFRERRAARVGELEEQIKKIEEENEREEAALKKTIQQQQQQIEEYKSQLLWWKNRCKAVEDELMTEKVAKEDAIKQLERINNSGRTTNNGNSVIGGCERCSSTRCQCIDDAFNIANITQMQTDDPHSKRGRSPSQGATQKRHRSNPEIKTEPEDLETDFTHSFSLRRHSRTGNDATTPILLDPCGFCQDGSPCICAEMAEDQPSDRSNQPSQLTKLPPIQNISQFTPPPSEGDVLSKSATLVSSNKSNPCANGPGTCAQCLADPRSSVFCKSLAASRASTRQEGGCCGGGGGKDGCCKNRSSGSDSSKQATSPITLSCADTFTTLSLHPKFASASNELSNWIPQLHTLPNPQNLNPDRRRDQNLTNRPALEVEAASVMGVLRYFDRRFADSK.

Polar residues predominate over residues Met-1–Ser-10. Residues Met-1 to Arg-82 form a disordered region. The bZIP domain maps to Asp-67–Arg-108. The interval Lys-72 to Arg-91 is basic motif. Positions Leu-95–Ile-102 are leucine-zipper. Disordered regions lie at residues Gln-201–Thr-242, Glu-282–Leu-317, and Thr-429–Arg-449. Polar residues predominate over residues Asp-287–Phe-307.

The protein belongs to the bZIP family. YAP subfamily.

The protein localises to the nucleus. Functionally, iron regulator crucial for the adaptation to iron starvation and iron excess, but is dispensable for virulence. SreA represses the expression of hapX and the siderophore system during iron sufficient conditions by an iron-sensing mechanism, while hapX represses sreA and activates the siderophore system during iron-limiting conditions, resulting in efficient iron uptake and inhibition of iron-consuming pathways. HapX targets include genes encoding a number of key iron-regulated factors such as the vacuolar iron importer cccA, as well as hemA, cycA and lysF involved in heme biosynthesis, respiration and lysine biosynthesis, respectively. Activation of the vacuolar iron importer cccA during high iron conditions is essential for iron detoxification. This chain is bZIP transcription factor hapX, found in Arthroderma benhamiae (strain ATCC MYA-4681 / CBS 112371) (Trichophyton mentagrophytes).